The primary structure comprises 676 residues: DNA ligase (676 aa).

NAD(+)-binding positions include 34–38, 84–85, and Glu116; these read DAEYD and SL. Lys118 functions as the N6-AMP-lysine intermediate in the catalytic mechanism. NAD(+) contacts are provided by Arg139, Glu174, Lys294, and Lys318. Positions 412, 415, 428, and 433 each coordinate Zn(2+). Residues 589–676 enclose the BRCT domain; sequence KGGEALKGLT…RTGKKAEELV (88 aa).

This sequence belongs to the NAD-dependent DNA ligase family. LigA subfamily. The cofactor is Mg(2+). Mn(2+) serves as cofactor.

The enzyme catalyses NAD(+) + (deoxyribonucleotide)n-3'-hydroxyl + 5'-phospho-(deoxyribonucleotide)m = (deoxyribonucleotide)n+m + AMP + beta-nicotinamide D-nucleotide.. Its function is as follows. DNA ligase that catalyzes the formation of phosphodiester linkages between 5'-phosphoryl and 3'-hydroxyl groups in double-stranded DNA using NAD as a coenzyme and as the energy source for the reaction. It is essential for DNA replication and repair of damaged DNA. The chain is DNA ligase from Thermus thermophilus (strain ATCC BAA-163 / DSM 7039 / HB27).